The sequence spans 303 residues: Succinate--CoA ligase [ADP-forming] subunit alpha (303 aa).

CoA contacts are provided by residues 20–23 (TGSE), Lys46, and 108–110 (ITE). Residue Tyr173 participates in substrate binding. His259 serves as the catalytic Tele-phosphohistidine intermediate.

The protein belongs to the succinate/malate CoA ligase alpha subunit family. As to quaternary structure, heterotetramer of two alpha and two beta subunits.

It catalyses the reaction succinate + ATP + CoA = succinyl-CoA + ADP + phosphate. The enzyme catalyses GTP + succinate + CoA = succinyl-CoA + GDP + phosphate. It functions in the pathway carbohydrate metabolism; tricarboxylic acid cycle; succinate from succinyl-CoA (ligase route): step 1/1. Its function is as follows. Succinyl-CoA synthetase functions in the citric acid cycle (TCA), coupling the hydrolysis of succinyl-CoA to the synthesis of either ATP or GTP and thus represents the only step of substrate-level phosphorylation in the TCA. The alpha subunit of the enzyme binds the substrates coenzyme A and phosphate, while succinate binding and nucleotide specificity is provided by the beta subunit. The sequence is that of Succinate--CoA ligase [ADP-forming] subunit alpha from Mycobacterium tuberculosis (strain CDC 1551 / Oshkosh).